A 257-amino-acid chain; its full sequence is METWFLYFITKSISYALFMVLIVTFLESLALVGLFLPGIVLMSILGTLIGNGTLSFYPAWIVGIIGCMCGDWISYYCGFKFKKCITNLHLLKNNNVVLDKITNTLTNYPITTILLGRFIGPTRPLVPMVCGMLNISLKTFIIPNILGCILWPPIYFLPGIFTGIAISNTTNYSENTYFKIQFLAAILLIWLGIFLLWKLWKRYTDTGKKKIYISNVNLCLLLTISLSAGITIMIYIQSNSTLIFFRKILWKILISSQ.

6 helical membrane passes run 5-25 (FLYFITKSISYALFMVLIVTF), 29-49 (LALVGLFLPGIVLMSILGTLI), 53-73 (TLSFYPAWIVGIIGCMCGDWI), 146-166 (LGCILWPPIYFLPGIFTGIAI), 180-200 (IQFLAAILLIWLGIFLLWKLW), and 216-236 (VNLCLLLTISLSAGITIMIYI).

This sequence belongs to the DedA family.

It localises to the cell membrane. This is an uncharacterized protein from Buchnera aphidicola subsp. Baizongia pistaciae (strain Bp).